Here is a 117-residue protein sequence, read N- to C-terminus: Transcription elongation factor A protein-like 8 (117 aa).

2 stretches are compositionally biased toward basic and acidic residues: residues 1-24 (MQKSCGENERKPQNMPKAEEDRPL) and 61-74 (YKEDSPVRHLDPEE). Residues 1-74 (MQKSCGENER…SPVRHLDPEE (74 aa)) form a disordered region. A coiled-coil region spans residues 73–100 (EEMIRGADELERLREEIRRVRNKFVMMH).

The protein belongs to the TFS-II family. TFA subfamily.

Its subcellular location is the nucleus. Functionally, may be involved in transcriptional regulation. This chain is Transcription elongation factor A protein-like 8 (TCEAL8), found in Bos taurus (Bovine).